The sequence spans 208 residues: Uridine kinase (208 aa).

11 to 18 serves as a coordination point for ATP; the sequence is GGTGSGKS.

This sequence belongs to the uridine kinase family.

Its subcellular location is the cytoplasm. It carries out the reaction uridine + ATP = UMP + ADP + H(+). The catalysed reaction is cytidine + ATP = CMP + ADP + H(+). The protein operates within pyrimidine metabolism; CTP biosynthesis via salvage pathway; CTP from cytidine: step 1/3. Its pathway is pyrimidine metabolism; UMP biosynthesis via salvage pathway; UMP from uridine: step 1/1. This is Uridine kinase from Clostridium perfringens (strain ATCC 13124 / DSM 756 / JCM 1290 / NCIMB 6125 / NCTC 8237 / Type A).